The following is a 95-amino-acid chain: Mitochondrial import inner membrane translocase subunit Tim13 (95 aa).

The Twin CX3C motif signature appears at 46–69 (CFKKCIGKPGSTLDNSEQKCIAMC). 2 disulfide bridges follow: Cys46-Cys69 and Cys50-Cys65.

Belongs to the small Tim family. Heterohexamer; composed of 3 copies of TIMM8 (TIMM8A or TIMM8B) and 3 copies of TIMM13, named soluble 70 kDa complex. Associates with the TIM22 complex, whose core is composed of TIMM22.

The protein resides in the mitochondrion inner membrane. In terms of biological role, mitochondrial intermembrane chaperone that participates in the import and insertion of some multi-pass transmembrane proteins into the mitochondrial inner membrane. Also required for the transfer of beta-barrel precursors from the TOM complex to the sorting and assembly machinery (SAM complex) of the outer membrane. Acts as a chaperone-like protein that protects the hydrophobic precursors from aggregation and guide them through the mitochondrial intermembrane space. The TIMM8-TIMM13 complex mediates the import of some proteins while the predominant TIMM9-TIMM10 70 kDa complex mediates the import of much more proteins. The sequence is that of Mitochondrial import inner membrane translocase subunit Tim13 (timm13) from Danio rerio (Zebrafish).